Consider the following 597-residue polypeptide: Aspartate--tRNA ligase (597 aa).

Glutamate 180 provides a ligand contact to L-aspartate. The segment at glutamine 204–lysine 207 is aspartate. Position 226 (arginine 226) interacts with L-aspartate. ATP is bound by residues arginine 226 to glutamate 228 and glutamine 235. Histidine 454 contacts L-aspartate. Glutamate 488 contributes to the ATP binding site. An L-aspartate-binding site is contributed by arginine 495. Residue glycine 540 to arginine 543 participates in ATP binding.

Belongs to the class-II aminoacyl-tRNA synthetase family. Type 1 subfamily. In terms of assembly, homodimer.

It is found in the cytoplasm. It carries out the reaction tRNA(Asp) + L-aspartate + ATP = L-aspartyl-tRNA(Asp) + AMP + diphosphate. In terms of biological role, catalyzes the attachment of L-aspartate to tRNA(Asp) in a two-step reaction: L-aspartate is first activated by ATP to form Asp-AMP and then transferred to the acceptor end of tRNA(Asp). The sequence is that of Aspartate--tRNA ligase from Clostridium perfringens (strain ATCC 13124 / DSM 756 / JCM 1290 / NCIMB 6125 / NCTC 8237 / Type A).